We begin with the raw amino-acid sequence, 236 residues long: Baculoviral IAP repeat-containing protein 8 (236 aa).

The BIR repeat unit spans residues 7 to 70; sequence WLITFGTWMY…KWYPGCKYLL (64 aa). Zn(2+)-binding residues include Cys39, Cys42, His59, and Cys66. An RING-type zinc finger spans residues 189 to 224; sequence CKICMDRHIAVVFIPCGHLVTCKQCAEAVDRCPMCN.

This sequence belongs to the IAP family. Binds to caspase-9.

It localises to the cytoplasm. Its function is as follows. Protects against apoptosis mediated by BAX. In Gorilla gorilla gorilla (Western lowland gorilla), this protein is Baculoviral IAP repeat-containing protein 8 (BIRC8).